A 525-amino-acid polypeptide reads, in one-letter code: 2-isopropylmalate synthase (525 aa).

A Pyruvate carboxyltransferase domain is found at 12–274 (VVIFDTTLRD…WNKIDTTQLT (263 aa)). 4 residues coordinate Mn(2+): aspartate 21, histidine 209, histidine 211, and asparagine 245. Residues 398–525 (KLLSLSVIAG…GHGASAAAAS (128 aa)) are regulatory domain.

The protein belongs to the alpha-IPM synthase/homocitrate synthase family. LeuA type 1 subfamily. Homodimer. The cofactor is Mn(2+).

The protein localises to the cytoplasm. It carries out the reaction 3-methyl-2-oxobutanoate + acetyl-CoA + H2O = (2S)-2-isopropylmalate + CoA + H(+). Its pathway is amino-acid biosynthesis; L-leucine biosynthesis; L-leucine from 3-methyl-2-oxobutanoate: step 1/4. Functionally, catalyzes the condensation of the acetyl group of acetyl-CoA with 3-methyl-2-oxobutanoate (2-ketoisovalerate) to form 3-carboxy-3-hydroxy-4-methylpentanoate (2-isopropylmalate). The polypeptide is 2-isopropylmalate synthase (Bradyrhizobium sp. (strain ORS 278)).